Here is a 103-residue protein sequence, read N- to C-terminus: Large ribosomal subunit protein bL21 (103 aa).

The protein belongs to the bacterial ribosomal protein bL21 family. In terms of assembly, part of the 50S ribosomal subunit. Contacts protein L20.

This protein binds to 23S rRNA in the presence of protein L20. The chain is Large ribosomal subunit protein bL21 from Ralstonia nicotianae (strain ATCC BAA-1114 / GMI1000) (Ralstonia solanacearum).